Consider the following 341-residue polypeptide: MLVLGIESSCDETGVALYDTERGLLAHQLHTQMAMHAEYGGVVPELASRDHIRRAIPLTEACLSEAGKKLADLDAIAYTQGPGLGGALMVGASMANALAFGLNIPVIPVHHLEGHLLSPLLADPKPEFPFLALLVSGGHTQLMAVRGVGDYEILGETVDDAAGEAFDKTAKLLGLPYPGGPLLSRLAESGSPDRFTLPRPMLHSGNLDMSFSGLKTAVLTLVRQQESAQGELDEQTRMDICRAFQEAIVEVLVKKSLAAMRQAGMKRLVVAGGVGANKQLRAALNDAAARKRFDVFYPPLALCTDNGAMIAFAGAMRLKFAEPAGGFTIKPRWDLSSLPAV.

The Fe cation site is built by His111 and His115. Residues 134 to 138, Asp167, Gly180, and Asn277 contribute to the substrate site; that span reads LVSGG. Residue Asp305 participates in Fe cation binding.

It belongs to the KAE1 / TsaD family. Fe(2+) serves as cofactor.

The protein localises to the cytoplasm. It carries out the reaction L-threonylcarbamoyladenylate + adenosine(37) in tRNA = N(6)-L-threonylcarbamoyladenosine(37) in tRNA + AMP + H(+). Its function is as follows. Required for the formation of a threonylcarbamoyl group on adenosine at position 37 (t(6)A37) in tRNAs that read codons beginning with adenine. Is involved in the transfer of the threonylcarbamoyl moiety of threonylcarbamoyl-AMP (TC-AMP) to the N6 group of A37, together with TsaE and TsaB. TsaD likely plays a direct catalytic role in this reaction. This is tRNA N6-adenosine threonylcarbamoyltransferase from Chromobacterium violaceum (strain ATCC 12472 / DSM 30191 / JCM 1249 / CCUG 213 / NBRC 12614 / NCIMB 9131 / NCTC 9757 / MK).